The chain runs to 347 residues: Quinolinate synthase (347 aa).

His47 and Ser68 together coordinate iminosuccinate. A [4Fe-4S] cluster-binding site is contributed by Cys113. Residues 139 to 141 (YAN) and Ser156 contribute to the iminosuccinate site. Cys200 serves as a coordination point for [4Fe-4S] cluster. Iminosuccinate-binding positions include 226 to 228 (HPE) and Thr243. Cys297 lines the [4Fe-4S] cluster pocket.

This sequence belongs to the quinolinate synthase family. Type 1 subfamily. Requires [4Fe-4S] cluster as cofactor.

It localises to the cytoplasm. It carries out the reaction iminosuccinate + dihydroxyacetone phosphate = quinolinate + phosphate + 2 H2O + H(+). It participates in cofactor biosynthesis; NAD(+) biosynthesis; quinolinate from iminoaspartate: step 1/1. In terms of biological role, catalyzes the condensation of iminoaspartate with dihydroxyacetone phosphate to form quinolinate. This Shigella boydii serotype 18 (strain CDC 3083-94 / BS512) protein is Quinolinate synthase.